Reading from the N-terminus, the 148-residue chain is MRAVLQRVTRATCTVEGRVTGATGPGLLILLGVAPEDTPETAWRLAAKIVKLRVFADETGRMNRSVQDIGGGILSISQFTLYADTRRGNRPGFSGAAAPEHARALYAEFNAALRAQGVAVGEGVFGAHMMLDLTNDGPVTLFLDTAES.

The short motif at 137 to 138 (GP) is the Gly-cisPro motif, important for rejection of L-amino acids element.

This sequence belongs to the DTD family. As to quaternary structure, homodimer.

It localises to the cytoplasm. It catalyses the reaction glycyl-tRNA(Ala) + H2O = tRNA(Ala) + glycine + H(+). The enzyme catalyses a D-aminoacyl-tRNA + H2O = a tRNA + a D-alpha-amino acid + H(+). Its function is as follows. An aminoacyl-tRNA editing enzyme that deacylates mischarged D-aminoacyl-tRNAs. Also deacylates mischarged glycyl-tRNA(Ala), protecting cells against glycine mischarging by AlaRS. Acts via tRNA-based rather than protein-based catalysis; rejects L-amino acids rather than detecting D-amino acids in the active site. By recycling D-aminoacyl-tRNA to D-amino acids and free tRNA molecules, this enzyme counteracts the toxicity associated with the formation of D-aminoacyl-tRNA entities in vivo and helps enforce protein L-homochirality. The protein is D-aminoacyl-tRNA deacylase of Deinococcus geothermalis (strain DSM 11300 / CIP 105573 / AG-3a).